Consider the following 309-residue polypeptide: Genome polyprotein (309 aa).

At 1 to 40 (GFADLMGYIPLVGAPLGGAARALAHGVRVLEDGVNYATGN) the chain is on the cytoplasmic side. Positions 36 to 39 (YATG) are important for lipid droplets localization. Residues 41-61 (LPGCSFSIFLLALLSCLTVPA) traverse the membrane as a helical segment. The propeptide at 50 to 63 (LLALLSCLTVPASA) is ER anchor for the core protein, removed in mature form by host signal peptidase. Topologically, residues 62–230 (SAYQVRNSSG…AGAHWGVLAG (169 aa)) are lumenal. Residues asparagine 68, asparagine 81, and asparagine 106 are each glycosylated (N-linked (GlcNAc...) asparagine; by host). Positions 137–168 (LVGSATLCSALYVGDLCGSVFLVGQLFTFSPR) are important for fusion. Asparagine 177 carries an N-linked (GlcNAc...) asparagine; by host glycan. The chain crosses the membrane as a helical span at residues 231–251 (IAYFSMVGNWAKVLVVLLLFA). Topologically, residues 252 to 309 (GVDATTYTTGGNAARTTQALTSFFSPGAKQDIQLINTNGSWHINRTALNCNASLDTGW) are lumenal. Positions 256-282 (TTYTTGGNAARTTQALTSFFSPGAKQD) are HVR1. N-linked (GlcNAc...) (high mannose) asparagine; by host glycosylation is found at asparagine 289, asparagine 295, and asparagine 302.

The protein belongs to the hepacivirus polyprotein family. As to quaternary structure, homooligomer. Interacts with E1 (via C-terminus). Interacts with the non-structural protein 5A. Interacts (via N-terminus) with host STAT1 (via SH2 domain); this interaction results in decreased STAT1 phosphorylation and ubiquitin-mediated proteasome-dependent STAT1 degradation, leading to decreased IFN-stimulated gene transcription. Interacts with host STAT3; this interaction constitutively activates STAT3. Interacts with host LTBR receptor. Interacts with host TNFRSF1A receptor and possibly induces apoptosis. Interacts with host HNRPK. Interacts with host YWHAE. Interacts with host UBE3A/E6AP. Interacts with host DDX3X. Interacts with host APOA2. Interacts with host RXRA protein. Interacts with host SP110 isoform 3/Sp110b; this interaction sequesters the transcriptional corepressor SP110 away from the nucleus. Interacts with host CREB3 nuclear transcription protein; this interaction triggers cell transformation. Interacts with host ACY3. Interacts with host C1QR1. Interacts with host RBM24; this interaction, which enhances the interaction of the mature core protein with 5'-UTR, may inhibit viral translation and favor replication. Interacts with host EIF2AK2/PKR; this interaction induces the autophosphorylation of EIF2AK2. Part of the viral assembly initiation complex composed of NS2, E1, E2, NS3, NS4A, NS5A and the mature core protein. In terms of assembly, forms a heterodimer with envelope glycoprotein E2. Interacts with mature core protein. Interacts with protease NS2. The heterodimer E1/E2 interacts with host CLDN1; this interaction plays a role in viral entry into host cell. Interacts with host SPSB2 (via C-terminus). Part of the viral assembly initiation complex composed of NS2, E1, E2, NS3, NS4A, NS5A and the mature core protein. Forms a heterodimer with envelope glycoprotein E1. Interacts with host CD81 and SCARB1 receptors; these interactions play a role in viral entry into host cell. Interacts with host EIF2AK2/PKR; this interaction inhibits EIF2AK2 and probably allows the virus to evade the innate immune response. Interacts with host CD209/DC-SIGN and CLEC4M/DC-SIGNR. Interact with host SPCS1; this interaction is essential for viral particle assembly. Interacts with protease NS2. The heterodimer E1/E2 interacts with host CLDN1; this interaction plays a role in viral entry into host cell. Part of the viral assembly initiation complex composed of NS2, E1, E2, NS3, NS4A, NS5A and the mature core protein. Post-translationally, specific enzymatic cleavages in vivo yield mature proteins. The structural proteins, core, E1, E2 and p7 are produced by proteolytic processing by host signal peptidases. The core protein precursor is synthesized as a 23 kDa, which is retained in the ER membrane through the hydrophobic signal peptide. Cleavage by the signal peptidase releases the 21 kDa mature core protein. The cleavage of the core protein precursor occurs between aminoacids 176 and 188 but the exact cleavage site is not known. Some degraded forms of the core protein appear as well during the course of infection. The other proteins (p7, NS2, NS3, NS4A, NS4B, NS5A and NS5B) are cleaved by the viral proteases. Autoprocessing between NS2 and NS3 is mediated by the NS2 cysteine protease catalytic domain and regulated by the NS3 N-terminal domain. In terms of processing, phosphorylated by host PKC and PKA. Ubiquitinated; mediated by UBE3A and leading to core protein subsequent proteasomal degradation. Post-translationally, highly N-glycosylated.

It is found in the host endoplasmic reticulum membrane. The protein localises to the host mitochondrion membrane. It localises to the virion. The protein resides in the host cytoplasm. Its subcellular location is the host nucleus. It is found in the host lipid droplet. The protein localises to the virion membrane. Its function is as follows. Packages viral RNA to form a viral nucleocapsid, and promotes virion budding. Participates in the viral particle production as a result of its interaction with the non-structural protein 5A. Binds RNA and may function as a RNA chaperone to induce the RNA structural rearrangements taking place during virus replication. Modulates viral translation initiation by interacting with viral IRES and 40S ribosomal subunit. Affects various cell signaling pathways, host immunity and lipid metabolism. Prevents the establishment of cellular antiviral state by blocking the interferon-alpha/beta (IFN-alpha/beta) and IFN-gamma signaling pathways and by blocking the formation of phosphorylated STAT1 and promoting ubiquitin-mediated proteasome-dependent degradation of STAT1. Activates STAT3 leading to cellular transformation. Regulates the activity of cellular genes, including c-myc and c-fos. May repress the promoter of p53, and sequester CREB3 and SP110 isoform 3/Sp110b in the cytoplasm. Represses cell cycle negative regulating factor CDKN1A, thereby interrupting an important check point of normal cell cycle regulation. Targets transcription factors involved in the regulation of inflammatory responses and in the immune response: suppresses TNF-induced NF-kappa-B activation, and activates AP-1. Binds to dendritic cells (DCs) via C1QR1, resulting in down-regulation of T-lymphocytes proliferation. Alters lipid metabolism by interacting with hepatocellular proteins involved in lipid accumulation and storage. Induces up-regulation of FAS promoter activity, and thereby contributes to the increased triglyceride accumulation in hepatocytes (steatosis). In terms of biological role, forms a heterodimer with envelope glycoprotein E2, which mediates virus attachment to the host cell, virion internalization through clathrin-dependent endocytosis and fusion with host membrane. Fusion with the host cell is most likely mediated by both E1 and E2, through conformational rearrangements of the heterodimer required for fusion rather than a classical class II fusion mechanism. E1/E2 heterodimer binds host apolipoproteins such as APOB and ApoE thereby forming a lipo-viro-particle (LVP). APOE associated to the LVP allows the initial virus attachment to cell surface receptors such as the heparan sulfate proteoglycans (HSPGs), syndecan-1 (SDC1), syndecan-1 (SDC2), the low-density lipoprotein receptor (LDLR) and scavenger receptor class B type I (SCARB1). The cholesterol transfer activity of SCARB1 allows E2 exposure and binding of E2 to SCARB1 and the tetraspanin CD81. E1/E2 heterodimer binding on CD81 activates the epithelial growth factor receptor (EGFR) signaling pathway. Diffusion of the complex E1-E2-EGFR-SCARB1-CD81 to the cell lateral membrane allows further interaction with Claudin 1 (CLDN1) and occludin (OCLN) to finally trigger HCV entry. Functionally, forms a heterodimer with envelope glycoprotein E1, which mediates virus attachment to the host cell, virion internalization through clathrin-dependent endocytosis and fusion with host membrane. Fusion with the host cell is most likely mediated by both E1 and E2, through conformational rearrangements of the heterodimer required for fusion rather than a classical class II fusion mechanism. The interaction between envelope glycoprotein E2 and host apolipoprotein E/APOE allows the proper assembly, maturation and infectivity of the viral particles. This interaction is probably promoted via the up-regulation of cellular autophagy by the virus. E1/E2 heterodimer binds host apolipoproteins such as APOB and APOE thereby forming a lipo-viro-particle (LVP). APOE associated to the LVP allows the initial virus attachment to cell surface receptors such as the heparan sulfate proteoglycans (HSPGs), syndecan-1 (SDC1), syndecan-1 (SDC2), the low-density lipoprotein receptor (LDLR) and scavenger receptor class B type I (SCARB1). The cholesterol transfer activity of SCARB1 allows E2 exposure and binding of E2 to SCARB1 and the tetraspanin CD81. E1/E2 heterodimer binding on CD81 activates the epithelial growth factor receptor (EGFR) signaling pathway. Diffusion of the complex E1-E2-EGFR-SCARB1-CD81 to the cell lateral membrane allows further interaction with Claudin 1 (CLDN1) and occludin (OCLN) to finally trigger HCV entry. Inhibits host EIF2AK2/PKR activation, preventing the establishment of an antiviral state. Viral ligand for CD209/DC-SIGN and CLEC4M/DC-SIGNR, which are respectively found on dendritic cells (DCs), and on liver sinusoidal endothelial cells and macrophage-like cells of lymph node sinuses. These interactions allow the capture of circulating HCV particles by these cells and subsequent facilitated transmission to permissive cells such as hepatocytes and lymphocyte subpopulations. The chain is Genome polyprotein from Hepatitis C virus (isolate HCT27) (HCV).